A 395-amino-acid chain; its full sequence is Protein TAMALIN (395 aa).

The tract at residues 1–52 is disordered; it reads MTLRRLRKLQQKEEAAATPDPAARTPDSEVAPAAPVPTPGPPAAAATPGPPA. Residues 16 to 33 show a composition bias toward low complexity; that stretch reads AATPDPAARTPDSEVAPA. Thr77 carries the post-translational modification Phosphothreonine. Ser94 carries the phosphoserine modification. The 90-residue stretch at 101–190 folds into the PDZ domain; sequence VLTLEKEDNQ…VLRLETLYGT (90 aa). Positions 181 to 258 are interaction with PSCD3; that stretch reads VLRLETLYGT…GAGLLPGSLP (78 aa). At Tyr237 the chain carries Phosphotyrosine. At Arg270 the chain carries Omega-N-methylarginine. Residues 293 to 349 form a disordered region; sequence SEPPALPPPPPPARAFGPGPAETPAVGPGPGPRAALSRSASVRCAGPGGGGGGGAPG. The span at 296 to 305 shows a compositional bias: pro residues; that stretch reads PALPPPPPPA. Residues 338-348 are compositionally biased toward gly residues; that stretch reads GPGGGGGGGAP. Residue Ser387 is modified to Phosphoserine.

As to quaternary structure, heteromer. Composed of TAMALIN, CYTH2 and at least one GRM1. Also interacts with CYTH3, GRM2, GRM3 and GRM5.

It localises to the cytoplasm. It is found in the perinuclear region. The protein resides in the cell membrane. Its subcellular location is the postsynaptic cell membrane. In terms of biological role, plays a role in intracellular trafficking and contributes to the macromolecular organization of group 1 metabotropic glutamate receptors (mGluRs) at synapses. This is Protein TAMALIN from Homo sapiens (Human).